Reading from the N-terminus, the 180-residue chain is Ribosome maturation factor RimM (180 aa).

The 74-residue stretch at 103–176 folds into the PRC barrel domain; the sequence is GDIWWDRDLV…RIVVDPPPGL (74 aa).

The protein belongs to the RimM family. As to quaternary structure, binds ribosomal protein uS19.

The protein localises to the cytoplasm. Its function is as follows. An accessory protein needed during the final step in the assembly of 30S ribosomal subunit, possibly for assembly of the head region. Essential for efficient processing of 16S rRNA. May be needed both before and after RbfA during the maturation of 16S rRNA. It has affinity for free ribosomal 30S subunits but not for 70S ribosomes. The sequence is that of Ribosome maturation factor RimM from Frankia alni (strain DSM 45986 / CECT 9034 / ACN14a).